Reading from the N-terminus, the 362-residue chain is tRNA-specific 2-thiouridylase MnmA 3 (362 aa).

ATP-binding positions include 11-18 and Met-37; that span reads GMSGGIDS. The Nucleophile role is filled by Cys-91. Cys-91 and Cys-188 are joined by a disulfide. Gly-115 provides a ligand contact to ATP. Residues 137–139 are interaction with tRNA; that stretch reads KDQ. The Cysteine persulfide intermediate role is filled by Cys-188. The tract at residues 296 to 297 is interaction with tRNA; sequence RY.

The protein belongs to the MnmA/TRMU family.

The protein localises to the cytoplasm. It catalyses the reaction S-sulfanyl-L-cysteinyl-[protein] + uridine(34) in tRNA + AH2 + ATP = 2-thiouridine(34) in tRNA + L-cysteinyl-[protein] + A + AMP + diphosphate + H(+). Catalyzes the 2-thiolation of uridine at the wobble position (U34) of tRNA, leading to the formation of s(2)U34. The sequence is that of tRNA-specific 2-thiouridylase MnmA 3 from Bacteroides fragilis (strain YCH46).